The following is a 265-amino-acid chain: Putative 2-amino-3,7-dideoxy-D-threo-hept-6-ulosonate synthase 2 (265 aa).

D27 serves as the catalytic Proton acceptor. 1-deoxy-D-threo-hexo-2,5-diulose 6-phosphate-binding positions include 27–31 (DHGVS) and 147–149 (YPR). Y147 acts as the Proton donor in catalysis. The active-site Schiff-base intermediate with substrate is the K177. 1-deoxy-D-threo-hexo-2,5-diulose 6-phosphate contacts are provided by residues 202-203 (GG) and 230-231 (GR).

Belongs to the DeoC/FbaB aldolase family. ADHS subfamily. As to quaternary structure, homodecamer.

It catalyses the reaction 1-deoxy-D-threo-hexo-2,5-diulose 6-phosphate + L-aspartate 4-semialdehyde = 2,3-dioxopropyl phosphate + 2-amino-2,3,7-trideoxy-D-lyxo-hept-6-ulosonate. Its function is as follows. Catalyzes a transaldol reaction between 6-deoxy-5-ketofructose 1-phosphate (DKFP) and L-aspartate semialdehyde (ASA) with an elimination of hydroxypyruvaldehyde phosphate to yield 2-amino-3,7-dideoxy-D-threo-hept-6-ulosonate (ADH). Plays a key role in an alternative pathway of the biosynthesis of 3-dehydroquinate (DHQ), which is involved in the canonical pathway for the biosynthesis of aromatic amino acids. This is Putative 2-amino-3,7-dideoxy-D-threo-hept-6-ulosonate synthase 2 from Archaeoglobus fulgidus (strain ATCC 49558 / DSM 4304 / JCM 9628 / NBRC 100126 / VC-16).